Here is a 510-residue protein sequence, read N- to C-terminus: 2,3-bisphosphoglycerate-independent phosphoglycerate mutase (510 aa).

Mn(2+) contacts are provided by D12 and S62. The active-site Phosphoserine intermediate is the S62. Residues H121, 151–152 (RD), R183, R189, 258–261 (RPDR), and K331 contribute to the substrate site. Mn(2+) is bound by residues D398, H402, D439, H440, and H458.

It belongs to the BPG-independent phosphoglycerate mutase family. Monomer. Requires Mn(2+) as cofactor.

The catalysed reaction is (2R)-2-phosphoglycerate = (2R)-3-phosphoglycerate. Its pathway is carbohydrate degradation; glycolysis; pyruvate from D-glyceraldehyde 3-phosphate: step 3/5. Its function is as follows. Catalyzes the interconversion of 2-phosphoglycerate and 3-phosphoglycerate. The protein is 2,3-bisphosphoglycerate-independent phosphoglycerate mutase of Clostridioides difficile (strain 630) (Peptoclostridium difficile).